The chain runs to 876 residues: GRB2-associated and regulator of MAPK protein 1 (876 aa).

Residues 12-320 form a CABIT region; the sequence is KDVKWSSVAV…HLVKGESWPE (309 aa). A phosphotyrosine mark is found at Tyr105 and Tyr453. The disordered stretch occupies residues 496-572; it reads IPGTLGAAVK…SPSPTLSYYS (77 aa). The segment at 498–550 is necessary for interaction with GRB2; sequence GTLGAAVKSSDTALPPPPVPPKSEAVREECRLLNAPPVPPRSAKPLSTSPSIP. Over residues 558 to 572 the composition is skewed to polar residues; that stretch reads RQQTRSPSPTLSYYS. Ser610 and Ser614 each carry phosphoserine. 2 disordered regions span residues 626–664 and 738–763; these read WPNH…PKRN and ASET…PDLS. 2 stretches are compositionally biased toward polar residues: residues 631–640 and 648–658; these read SGASESQTRS and RSYSYPRQKTP. In terms of domain architecture, SAM spans 811 to 876; it reads LSIEEVSKSL…QFINGWRPKI (66 aa).

This sequence belongs to the GAREM family. As to quaternary structure, isoform 1 interacts with EGFR. Isoform 1 interacts (via proline-rich domain and phosphorylated at Tyr-105 and Tyr-453) with GRB2 (via SH3 domains); the interaction occurs upon EGF stimulation. Isoform 1 interacts (phosphorylated at Tyr-453) with PTPN11; the interaction increases MAPK/ERK activity and does not affect the GRB2/SOS complex formation. Isoform 2 does not interact with GRB2. Post-translationally, on EGF stimulation, phosphorylated on Tyr-105 and Tyr-453. Isoform 1 is ubiquitously expressed.

Functionally, acts as an adapter protein that plays a role in intracellular signaling cascades triggered either by the cell surface activated epidermal growth factor receptor and/or cytoplasmic protein tyrosine kinases. Promotes activation of the MAPK/ERK signaling pathway. Plays a role in the regulation of cell proliferation. This chain is GRB2-associated and regulator of MAPK protein 1 (GAREM1), found in Homo sapiens (Human).